A 429-amino-acid chain; its full sequence is Inositol-3-phosphate synthase 1 (429 aa).

Residues 12–32 (LGVLVVGVGGAVATTMIVGTL) traverse the membrane as a helical segment. NAD(+) contacts are provided by A22, V23, D79, A116, A165, T167, Y201, S244, R276, D277, and K290.

This sequence belongs to the myo-inositol 1-phosphate synthase family. Homotetramer. The cofactor is NAD(+).

It localises to the membrane. It catalyses the reaction D-glucose 6-phosphate = 1D-myo-inositol 3-phosphate. Its pathway is polyol metabolism; myo-inositol biosynthesis; myo-inositol from D-glucose 6-phosphate: step 1/2. Functionally, key enzyme in myo-inositol biosynthesis pathway that catalyzes the conversion of glucose 6-phosphate to 1D-myo-inositol 3-phosphate in a NAD-dependent manner. The polypeptide is Inositol-3-phosphate synthase 1 (Bacteroides thetaiotaomicron (strain ATCC 29148 / DSM 2079 / JCM 5827 / CCUG 10774 / NCTC 10582 / VPI-5482 / E50)).